The following is a 266-amino-acid chain: Small ribosomal subunit protein uS2 (266 aa).

Residues 247–266 form a disordered region; that stretch reads EGENNYSNNRSWNKPERTNN. The segment covering 249–258 has biased composition (polar residues); it reads ENNYSNNRSW.

The protein belongs to the universal ribosomal protein uS2 family.

The protein is Small ribosomal subunit protein uS2 of Mesoplasma florum (strain ATCC 33453 / NBRC 100688 / NCTC 11704 / L1) (Acholeplasma florum).